Reading from the N-terminus, the 137-residue chain is Holo-[acyl-carrier-protein] synthase (137 aa).

2 residues coordinate Mg(2+): D8 and E57.

It belongs to the P-Pant transferase superfamily. AcpS family. Requires Mg(2+) as cofactor.

Its subcellular location is the cytoplasm. The enzyme catalyses apo-[ACP] + CoA = holo-[ACP] + adenosine 3',5'-bisphosphate + H(+). Functionally, transfers the 4'-phosphopantetheine moiety from coenzyme A to a Ser of acyl-carrier-protein. The chain is Holo-[acyl-carrier-protein] synthase from Mesorhizobium japonicum (strain LMG 29417 / CECT 9101 / MAFF 303099) (Mesorhizobium loti (strain MAFF 303099)).